A 202-amino-acid polypeptide reads, in one-letter code: MTQLDSRTEATTTRAFDQPRAEAAVRELLLAIGEDPDRGGLRDTPARVARAYREIFAGLYTDPDAVLNTMFDEDHDELVLIKEIPLYSTCEHHLVSFHGVAHVGYIPGRDGRVTGLSKIARLVDLYAKRPQVQERLTSQIADALVKRLGPRGVLVVVEAEHLCMAMRGVRKPGAVTTTSAVRGQFKTDAASRAEALDLILRK.

3 residues coordinate Zn(2+): cysteine 90, histidine 93, and cysteine 163.

The protein belongs to the GTP cyclohydrolase I family. As to quaternary structure, homomer.

The catalysed reaction is GTP + H2O = 7,8-dihydroneopterin 3'-triphosphate + formate + H(+). Its pathway is cofactor biosynthesis; 7,8-dihydroneopterin triphosphate biosynthesis; 7,8-dihydroneopterin triphosphate from GTP: step 1/1. The polypeptide is GTP cyclohydrolase 1 (Mycobacterium ulcerans (strain Agy99)).